The primary structure comprises 370 residues: 3-isopropylmalate dehydrogenase (370 aa).

77–90 (GPKWDSVPYEVRPE) is a binding site for NAD(+). Positions 97, 107, 135, and 226 each coordinate substrate. D226, D250, and D254 together coordinate Mg(2+). Position 290-302 (290-302 (GSAPDIAGKGIAN)) interacts with NAD(+).

This sequence belongs to the isocitrate and isopropylmalate dehydrogenases family. LeuB type 1 subfamily. Homodimer. Requires Mg(2+) as cofactor. Mn(2+) is required as a cofactor.

The protein localises to the cytoplasm. It catalyses the reaction (2R,3S)-3-isopropylmalate + NAD(+) = 4-methyl-2-oxopentanoate + CO2 + NADH. Its pathway is amino-acid biosynthesis; L-leucine biosynthesis; L-leucine from 3-methyl-2-oxobutanoate: step 3/4. In terms of biological role, catalyzes the oxidation of 3-carboxy-2-hydroxy-4-methylpentanoate (3-isopropylmalate) to 3-carboxy-4-methyl-2-oxopentanoate. The product decarboxylates to 4-methyl-2 oxopentanoate. In Brucella melitensis biotype 1 (strain ATCC 23456 / CCUG 17765 / NCTC 10094 / 16M), this protein is 3-isopropylmalate dehydrogenase.